A 7524-amino-acid polypeptide reads, in one-letter code: MKLILLYLAVVLCFVGKGAARSPTTTRTPTPSTSEKASHVPEATPTYSEANEVAGEATMWGKDKYKALNGHIFSFESECTFTFCRDCAEPGGDFNIEIKKHKNGDIEEIKALIDDVEILVVRNSISVNEERVKVPFSNKMIHIKKQGNHYSLKTRRRILSLKWSKDKLSLILYSHYTTCGLCGNFDSVPGDDVNEHIASSKISNDCPSPLSRSNEVCEDGVQYCDKIIETYFEKCSKVSPLSREYKNVCADEYCRKGGGKQTTCDTYSELARLCAYDGPGDYEHWRDDSAVVCAKEQCPGKHIYKECGPSNPPTCSNVAPFQDSECVSGCTCPEGYLLDDIGEKGKCVLKEKCPCESNGKVYKPGKVREGPCGSRCTCQEAKWSCTEARCPGICKVEGSSFTTFDDNKFSHPGDCHFLAVHNDEISISVEIHPCGNGQTGSCLTSVMVLQNSSSSSNRYVFNRDGTVTKDGVIIKGYYYSDDVQIFNSSSSYMQAEILSHIKLQIQLAPRMQLYVSLAPNTSTDTVGLCGSFNNKAEDDFMSSQNILESTAQAFANSWEMMPCSEGSPSSCVSIETEKFAESNCEILLSSSGPFAACHQTVNPKFYHEECKKYTCSCENGQDCLCTVLGNYVKACAEKEIYLVGWRDGLCEVSCPSGLVFNYKVKTCNSSCRSLSARDRSCDIEDIPVDGCTCPDGMYQNNEGNCVQKSECDCYVNDEIVQPGKSILIDDNKCVCQDGVLHCQTPLDLTLQNCSRGAEYIDCKDPKAQRRTERTCATRNIPDFEGDLPCKRGCYCPVGMVRNSKGICIHPDDCPCSFGDREYEQGSVTSVGCNECTCIKGSWNCTQNECQSTCHVYGEGHFRTFDGESYSFDGLCQYTFLEDYCGQENGTFRILIESVPCCENGLTCSRKVIVTFQDQNIILQDGKVTAVQTAESTDCRERSANLYSIHTVGLYLIVKLLNGIILIWDKYTKVSVILDPSWQNKVCGLCGNNNGDLKDDFTTRHSSVAAGALEFANSWKTSQECSDTVTQSFPCDSNPYCKAWAEKRCEILRDDTFRDCHSKVDPTTYYDACIEEACSCDMEGKYLGFCTAVAMYAEACNAAGVCVSWRKPNLCPVYCDYYNAPGECSWHYEPCGTVTAKTCKDQVIGQKFSSLLEGCYAKCPENAPYLDENTMKCVQLSECSCFYNDVIPAGGAVVDDCGRTCSCSAGELECSETPPNSTTTTTATTAAVSTATTTSVLSTSAAATRASSSTSGSVETSVPATTSTSKAQAHITTASSTETSALNSTAVYPKATTREGLLSSSGPGAFVAERPDNTPRPAVSTTSAGSTSARAATTSPGGSSGSSAPASSTSGRAATTTSTSAATTTTTTTATTVGSAGSSAPTASSTAAGSGLREAANATSAPASTSGQPGASTGSSGTSSSVSSTAAATTAGTTTAASNETSAPASTAGPTSSATTAAPASSSASSATTPAETAGSTTGPAVSTTSAGSTSARAATTSPGGSSGSSAPASSTSGRAATTTSTATTTTTTTTTATTVGSAGSSAPTASSTAAGSGLREAANATSAPASTSGQPGASTGSSGTSSSVSSTAAATTAGTTTAASNETSAPASTAGPTSSATTAAPASSSASSATTPAETAGSTTGPAVSTTSAGSTSARAATTSPGGSSGSSAPASSTSGRAATTTSTATTTTTTTTTATTVGSAGSSAPTASSTAAGSGLREAANATSAPASTSGQPGASTGSSGTSSSVSSTAAATTAGTTTAASNETSAPASTAGPTSSATTAAPASSSASSATTPAETAGSTTGPAVSTTSAGSTSARAATTSPGGSSGSSAPASSTSGRAATTTSTATTTTTTTTTATTVGSAGSSAPTASSTAAGSGLREAANATSAPASTSGQPGASTGSSGTSSSVSSTAAATTAGTTTAASNETSAPASTAGPTSSATTAAPASSSASSATTPAETAGSTTGPAVSTTSAGSTSARAATTSPGGSSGSSAPASSTSGRAATTTSTATTTTTTTTTATTVGSAGSSAPTASSTAAGSGLREAANATSAPASTSGQPGASTGSSGTSSSVSSTAAATTAGTTTAASNETSAPASTAGPTSSATTAAPASSSASSATTPAETAGSTTGPAVSTTSAGSTSARAATTSPGGSSGSSAPASSTSGRAATTTSTATTTTTTTTTATTVGSAGSSAPTASSTAAGSGLREAANATSAPASTSGQPGASTGSSGTSSSVSSTAAATTAGTTTAASNETSAPASTAGPTSSATTAAPASSSASSATTPAETAGSTTGPAVSTTSAGSTSARAATTSPGGSSGSSAPASSTSGRAATTTSTATTTTTTTTTATTVGSAGSSAPTASSTAAGSGLREAANATSAPASTSGQPGASTGSSGTSSSVSSTAAATTAGTTTAASNETSAPASTAGPTSSATTAAPASSSASSATTPAETAGSTTGPAVSTTSAGSTSARAATTSPGGSSGSSAPASSTSGRAATTTSTATTTTTTTTTATTVGSAGSSAPTASSTAAGSGLREAANATSAPASTSGQPGASTGSSGTSSSVSSTAAATTAGTTTAASNETSAPASTAGPTSSATTAAPASSSASSATTPAETAGSTTGPAVSTTSAGSTSARAATTSPGGSSGSSAPASSTSGRAATTTSTATTTTTTTTTATTVGSAGSSAPTASSTAAGSGLREAANATSAPASTSGQPGASTGSSGTSSSVSSTAAATTAGTTTAASNETSAPASTAGPTSSATTAAPASSSASSATTPAETAGSTTGPAVSTTSAGSTSARAATTSPGGSSGSSAPASSTSGRAATTTSTATTTTTTTTTATTVGSAGSSAPTASSTAAGSGLREAANATSAPASTSGQPGASTGSSGTSSSVSSTAAATTAGTTTAASNETSAPASTAGPTSSATTAAPASSSASSATTPAETAGSTTGPAVSTTSAGSTSARAATTSPGGSSGSSAPASSTSGRAATTTSTATTTTTTTTTATTVGSAGSSAPTASSTAAGSGLREAANATSAPASTSGQPGASTGSSGTSSSVSSTAAATTAGTTTAASNETSAPASTAGPTSSATTAAPASSSASSATTPAETAGSTTGPAVSTTSAGSTSARAATTSPGGSSGSSAPASSTSGRAATTTSTATTTTTTTTTATTVGSAGSSAPTASSTAAGSGLREAANATSAPASTSGQPGASTGSSGTSSSVSSTAAATTAGTTTAASNETSAPASTAGPTSSATTAAPASSSASSATTPAETAGSTTGPAVSTTSAGSTSARAATTSPGGSSGSSAPASSTSGRAATTTSTATTTTTTTTTATTVGSAGSSAPTASSTAAGSGLREAANATSAPASTSGQPGASTGSSGTSSSVSSTAAATTAGTTTAASNETSAPASTAGPTSSATTAAPASSSASSATTPAETAGSTTGPAVSTTSAGSTSARAATTSPGGSSGSSAPASSTSGRAATTTSTATTTTTTTTTATTVGSAGSSAPTASSTAAGSGLREAANATSAPASTSGQPGASTGSSGTSSSVSSTAAATTAGTTTAASNETSAPASTAGPTSSATTAAPASSSASSATTPAETAGSTTGPAVSTTSAGSTSARAATTSPGGSSGSSAPASSTSGRAATTTSTATTTTTTTTTATTVGSAGSSAPTASSTAAGSGLREAANATSAPASTSGQPGASTGSSGTSSSVSSTAAATTAGTTTAASNETSAPASTAGPTSSATTAAPASSSASSATTPAETAGSTTGPAVSTTSAGSTSARAATTSPGGSSGSSAPASSTSGRAATTTSTATTTTTTTTTATTVGSAGSSAPTASSTAAGSGLREAANATSAPASTSGQPGASTGSSGTSSSVSSTAAATTAGTTTAASNETSAPASTAGPTSSATTAAPASSSASSATTPAETAGSTTGPAVSTTSAGSTSARAATTSPGGSSGSSAPASSTSGRAATTTSTATTTTTTTTTATTVGSAGSSAPTASSTAAGSGLREAANATSAPASTSGQPGASTGSSGTSSSVSSTAAATTAGTTTAASNETSAPASTAGPTSSATTAAPASSSASSATTPAETAGSTTGPAVSTTSAGSTSARAATTSPGGSSGSSAPASSTSGRAATTTSTATTTTTTTTTATTVGSAGSSAPTASSTAAGSGLREAANATSAPASTSGQPGASTGSSGTSSSVSSTAAATTAGTTTAASNETSAPASTAGPTSSATTAAPASSSASSATTPAETAGSTTGPAVSTTSAGSTSARAATTSPGGSSGSSAPASSTSGRAATTTSTATTTTTTTTTATTVGSAGSSAPTASSTAAGSGLREAANATSAPASTSGQPGASTGSSGTSSSVSSTAAATTAGTTTAASNETSAPASTAGPTSSATTAAPASSSASSATTPAETAGSTTGPAVSTTSAGSTSARAATTSPGGSSGSSAPASSTSGRAATTTSTATTTTTTTTTATTVGSAGSSAPTASSTAAGSGLREAANATSAPASTSGQPGASTGSSGTSSSVSSTAAATTAGTTTAASNETSAPASTAGPTSSATTAAPASSSASSATTPAETAGSTTGPAVSTTSAGSTSARAATTSPGGSSGSSAPASSTSGRAATTTSTATTTTTTTTTATTVGSAGSSAPTASSTAAGSGLREAANATSAPASTSGQPGASTGSSGTSSSVSSTAAATTAGTTTAASNETSAPASTAGPTSSATTAAPASSSASSATTPAETAGSTTGPAVSTTSAGSTSARAATTSPGGSSGSSAPASSTSGRAATTTSTATTTTTTTTTATTVGSAGSSAPTASSTAAGSGLREAANATSAPASTSGQPGASTGSSGTSSSVSSTAAATTAGTTTAASNETSAPASTAGPTSSATTAAPASSSASSATTPAETAGSTTGPAVSTTSAGSTSARAATTSPGGSSGSSAPASSTSGRAATTTSTATTTTTTTTTATTVGSAGSSAPTASSTAAGSGLREAANATSAPASTSGQPGASTGSSGTSSSVSSTAAATTAGTTTAASNETSAPASTAGPTSSATTAAPASSSASSATTPAETAGSTTGPAVSTTSAGSTSARAATTSPGGSSGSSAPASSTSGRAATTTSTATTTTTTTTTATTVGSAGSSAPTASSTAAGSGLREAANATSAPASTSGQPGASTGSSGTSSSVSSTAAATTAGTTTAASNETSAPASTAGPTSSATTAAPASSSASSATTPAETAGSTTGPAVSTTSAGSTSARAATTSPGGSSGSSAPASSTSGRAATTTSTATTTTTTTTTATTVGSAGSSAPTASSTAAGSGLREAANATSAPASTSGQPGASTGSSGTSSSVSSTAAATTAGTTTAASNETSAPASTAGPTSSATTAAPASSSASSATTPAETAGSTTGPAVSTTSAGSTSARAATTSPGGSSGSSAPASSTSGRAATTTSTATTTTTTTTTATTVGSAGSSAPTASSTAAGSGLREAANATSAPASTSGQPGASTGSSGTSSSVSSTAAATTAGTTTAASNETSAPASTAGPTSSATTAAPASSSASSATTPAETAGSTTGPAVSTTSAGSTSARAATTSPGGSSGSSAPASSTSGRAATTTSTATTTTTTTTTATTVGSAGSSAPTASSTAAGSGLREAANATSAPASTSGQPGASTGSSGTSSSVSSTAAATTAGTTTAASNETSAPASTAGPTSSATTAAPASSSASSATTPAETAGSTTGPAVSTTSAGSTSARAATTSPGGSSGSSAPASSTSGRAATTTSTATTTTTTTTTATTVGSAGSSAPTASSTAAGSGLREAANATSAPASTSGQPGASTGSSGTSSSVSSTAAATTAGTTTAASNETSAPASTAGPTSSATTAAPASSSASSATTPAETAGSTTGPAVSTTSAGSTSARAATTSPGGSSGSSAPASSTSGRAATTTSTATTTTTTTTTATTVGSAGSSAPTASSTAAGSGLREAANATSAPASTSGQPGASTGSSGTSSSVSSTAAATTAGTTTAASNETSAPASTAGPTSSATTAAPASSSASSATTPAETAGSTTGPAVSTTSAGSTSARAATTSPGGSSGSSAPASSTSGRAATTTSTATTTTTTTTTATTVGSAGSSAPTASSTAAGSGLREAANATSAPASTSGQPGASTGSSGTSSSVSSTAAATTAGTTTAASNETSAPASTAGPTSSATTAAPASSSASSATTPAETAGSTTGPAVSTTSAGSTSARAATTSPGGSSGSSAPASSTSGRAATTTSTATTTTTTTTTATTVGSAGSSAPTASSTAAGSGLREAANATSAPASTSGQPGASTGSSGTSSSVSSTAAATTAGTTTAASNETSAPASTAGPTSSATTAAPASSSASSATTPAETAGSTTGPAVSTTSAGSTSARAATTSPGGSSGSSAPASSTSGRAATTTSTATTTTTTTTTATTVGSAGSSAPTASSTAAGSGLREAANATSAPASTSGQPGASTGSSGTSSSVSSTAAATTAGTTTAASNETSAPASTAGPTSSATTAAPASSSASSATTPAETAGSTTGPAVSTTSAGSTSARAATTSPGGSSGSSAPASSTSGRAATTTSTATTTTTTTTTATTVGSAGSSAPTASSTAAGSGLREAANATSAPASTSGQPGASTGSSGTSSSVSSTAAATTAGTTTAASNETSAPASTAGPTSSATTAAPASSSASSATTPAETAGSTTGPAVSTTSAGSTSARAATTSPGGSSGSSAPASSTSGRAATTTSTATTTTTTTTTATTVGSAGSSAPTASSTAAGSGLREAANATSAPASTSGQPGASTGSSGTSSSVSSTAAATTAGTTTAASNETSAPASTAGPTSSATTAAPASSSASSATTPAETAGSTTGPAVSTTSAGSTSARAATTSPGGSSGSSAPASSTSGRAATTTSTATTTTTTTTTATTVGSAGSSAPTASSTAAGSGLREAANATSAPASTSGQPGASTGSSGTSSSVSSTAAATTAGTTTAASNETSAPASTAGPTSSATTAAPASSSASSATTPAETAGSTTGPAVSTTSAGSTSARAATTSPGGSSGSSAPASSTSGRAATTTSTATTTTTTTTTATTVGSAGSSAPTASSTAAGSGLREAANATSAPVSTSGQPGASTGSSGTSSSVSSTAAATTAGTTTAASNETSAPASTAGPTSSATTAAPASSSASSATTPAETAGSTTGPAVSTTSAGSTSARAATTSPGGSSGSSSLAISTMSVSSSSFISPSGHPVPSTASVAFLSSPSVIKTGGTTGTTAKSNETTGRTTSMPASTSVAPGVTTSPNISQPECPDSLPPTPVCHGPLGEEKSPGDVWISNCHQCTCTEKQAVDCKPKECPSPPTCKDGEKLMKFKSNDSCCEIGHCEPRTCLFNNTDYAIGSSFDDPSNPCLSYTCNPTGLVAVVQDCPKQTWCAEEERIYDSNKCCYKCKNDCRTTPVNVTVKYNGCRKRVEMARCIGECKRSVKYNYETFQLENSCSCCREENYEFRDIALECSDGSTIPYRYRHTTTCSCRDQCEQSKAS.

Positions 1–20 are cleaved as a signal peptide; that stretch reads MKLILLYLAVVLCFVGKGAA. Positions 20–47 are disordered; sequence ARSPTTTRTPTPSTSEKASHVPEATPTY. Over residues 21–34 the composition is skewed to low complexity; the sequence is RSPTTTRTPTPSTS. Residues 55 to 225 enclose the VWFD 1 domain; it reads GEATMWGKDK…VCEDGVQYCD (171 aa). Cys-79 and Cys-224 form a disulfide bridge. The 56-residue stretch at 298–353 folds into the TIL domain; the sequence is CPGKHIYKECGPSNPPTCSNVAPFQDSECVSGCTCPEGYLLDDIGEKGKCVLKEKC. 2 VWFD domains span residues 392-568 and 851-1025; these read GICK…EGSP and STCH…QECS. Intrachain disulfides connect Cys-394–Cys-529, Cys-434–Cys-442, Cys-853–Cys-989, Cys-875–Cys-1024, Cys-884–Cys-986, and Cys-900–Cys-907. Residues 1244–1261 show a composition bias toward low complexity; the sequence is AAATRASSSTSGSVETSV. Disordered stretches follow at residues 1244–7217 and 7249–7297; these read AAAT…SSLA and SVIK…CPDS. Residues 1262-1289 show a composition bias toward polar residues; the sequence is PATTSTSKAQAHITTASSTETSALNSTA. Composition is skewed to low complexity over residues 1320–7099 and 7112–7217; these read PAVS…AGSG and STSG…SSLA. Tandem repeats lie at residues 1321–1483, 1484–1646, 1647–1809, 1810–1972, 1973–2135, 2136–2298, 2299–2461, 2462–2624, 2625–2787, 2788–2950, 2951–3113, 3114–3276, 3277–3439, 3440–3602, 3603–3765, 3766–3928, 3929–4091, 4092–4254, 4255–4417, 4418–4580, 4581–4743, 4744–4906, 4907–5069, 5070–5232, 5233–5395, 5396–5558, 5559–5721, 5722–5884, 5885–6047, 6048–6210, 6211–6373, 6374–6536, 6537–6699, 6700–6862, 6863–7025, and 7026–7188. Residues 1321–7188 form an approximate repeats region; sequence AVSTTSAGST…AETAGSTTGP (5868 aa). Over residues 7261 to 7291 the composition is skewed to polar residues; that stretch reads AKSNETTGRTTSMPASTSVAPGVTTSPNISQ. 2 VWFC domains span residues 7302–7368 and 7370–7432; these read PVCH…GHCE and RTCL…YKCK. 4 disulfides stabilise this stretch: Cys-7435-Cys-7482, Cys-7449-Cys-7496, Cys-7458-Cys-7512, and Cys-7462-Cys-7514. Positions 7435 to 7519 constitute a CTCK domain; it reads CRTTPVNVTV…TTCSCRDQCE (85 aa).

In terms of tissue distribution, specifically expressed in sublingual salivary glands. Expressed by mucous cells of the submandibular gland and submucosal gland of the trachea. Expression is altered in sld (sublingual gland differentiation arrest) mutants.

It is found in the secreted. Its function is as follows. May function in ocular mucus homeostasis. In Mus musculus (Mouse), this protein is Mucin-19 (Muc19).